The primary structure comprises 462 residues: A-type ATP synthase subunit B (462 aa).

Belongs to the ATPase alpha/beta chains family. In terms of assembly, has multiple subunits with at least A(3), B(3), C, D, E, F, H, I and proteolipid K(x).

It localises to the cell membrane. Its function is as follows. Component of the A-type ATP synthase that produces ATP from ADP in the presence of a proton gradient across the membrane. The B chain is a regulatory subunit. The chain is A-type ATP synthase subunit B from Cenarchaeum symbiosum (strain A).